Here is a 260-residue protein sequence, read N- to C-terminus: Type III pantothenate kinase (260 aa).

6-13 (DVGNTNIT) serves as a coordination point for ATP. Residue 107–110 (GADR) coordinates substrate. Residue aspartate 109 is the Proton acceptor of the active site. Aspartate 129 is a K(+) binding site. Position 132 (threonine 132) interacts with ATP. Residue threonine 184 participates in substrate binding.

It belongs to the type III pantothenate kinase family. Homodimer. It depends on NH4(+) as a cofactor. K(+) is required as a cofactor.

The protein resides in the cytoplasm. It carries out the reaction (R)-pantothenate + ATP = (R)-4'-phosphopantothenate + ADP + H(+). It participates in cofactor biosynthesis; coenzyme A biosynthesis; CoA from (R)-pantothenate: step 1/5. In terms of biological role, catalyzes the phosphorylation of pantothenate (Pan), the first step in CoA biosynthesis. In Agathobacter rectalis (strain ATCC 33656 / DSM 3377 / JCM 17463 / KCTC 5835 / VPI 0990) (Eubacterium rectale), this protein is Type III pantothenate kinase.